Reading from the N-terminus, the 366-residue chain is Protein-glutamate methylesterase/protein-glutamine glutaminase of group 2 operon (366 aa).

The 118-residue stretch at 19–136 (RVLIVDDSAM…GQGLPAIMRD (118 aa)) folds into the Response regulatory domain. The residue at position 70 (Asp-70) is a 4-aspartylphosphate. One can recognise a CheB-type methylesterase domain in the interval 162-356 (PGASEDWIHA…ARMMLAAAAD (195 aa)). Residues Ser-175, His-201, and Asp-298 contribute to the active site.

The protein belongs to the CheB family. Phosphorylated by CheA. Phosphorylation of the N-terminal regulatory domain activates the methylesterase activity.

Its subcellular location is the cytoplasm. The catalysed reaction is [protein]-L-glutamate 5-O-methyl ester + H2O = L-glutamyl-[protein] + methanol + H(+). It carries out the reaction L-glutaminyl-[protein] + H2O = L-glutamyl-[protein] + NH4(+). Involved in chemotaxis. Part of a chemotaxis signal transduction system that modulates chemotaxis in response to various stimuli. Catalyzes the demethylation of specific methylglutamate residues introduced into the chemoreceptors (methyl-accepting chemotaxis proteins or MCP) by CheR. Also mediates the irreversible deamidation of specific glutamine residues to glutamic acid. In Cereibacter sphaeroides (Rhodobacter sphaeroides), this protein is Protein-glutamate methylesterase/protein-glutamine glutaminase of group 2 operon.